Here is a 333-residue protein sequence, read N- to C-terminus: Salivary glue protein Sgs-3 (333 aa).

Positions 1-23 are cleaved as a signal peptide; the sequence is MKLTIATALVGILLIACAHVANG. The interval 51 to 285 is disordered; sequence TCRPPTTTRC…ATARPTSKPC (235 aa). The span at 60 to 73 shows a compositional bias: pro residues; sequence CPPPTTTRCPPPTR. Over residues 74–88 the composition is skewed to low complexity; that stretch reads PAECTATTKRPTARP. Basic residues predominate over residues 89–277; it reads TTKRATTRRT…TKRATTKRAT (189 aa).

In Drosophila erecta (Fruit fly), this protein is Salivary glue protein Sgs-3 (Sgs3).